The following is a 695-amino-acid chain: Glycine--tRNA ligase beta subunit (695 aa).

The protein belongs to the class-II aminoacyl-tRNA synthetase family. As to quaternary structure, tetramer of two alpha and two beta subunits.

It is found in the cytoplasm. It carries out the reaction tRNA(Gly) + glycine + ATP = glycyl-tRNA(Gly) + AMP + diphosphate. In Desulforamulus reducens (strain ATCC BAA-1160 / DSM 100696 / MI-1) (Desulfotomaculum reducens), this protein is Glycine--tRNA ligase beta subunit.